A 132-amino-acid chain; its full sequence is Galectin-2 (132 aa).

A Galectin domain is found at 4-131 (ELEVKNMDMK…GFNMSSFKLK (128 aa)). 65 to 71 (WGQEQRE) provides a ligand contact to a beta-D-galactoside.

As to quaternary structure, homodimer.

Its function is as follows. This protein binds beta-galactoside. Its physiological function is not yet known. In Homo sapiens (Human), this protein is Galectin-2 (LGALS2).